A 158-amino-acid polypeptide reads, in one-letter code: uncharacterized protein (158 aa).

Disordered stretches follow at residues 1–86 (MDFR…DHWW) and 138–158 (ASQV…LLGF). Positions 7–76 (SPTTCTTPAS…PTPASSGSAA (70 aa)) are enriched in low complexity.

This is an uncharacterized protein from Homo sapiens (Human).